Reading from the N-terminus, the 563-residue chain is MNTFLIDYQRIRTPKKGFSKLFCDYSSESEARTKLLADCFHLDYRKDGDYYRHLGFLASRNFRREALVELLTEQNERFDGSERQQREIEKLRSPRCMAIVTGQQTGLFTGPLYTIYKALTAVVLARKQKELFPEYDFVPVFWIESEDHDFDEASSTVLFSGGGLEQITAEAAHRLPDQMAGATQLGASIGATVQEFLDLLPDTEFKPEIAEILESCYEPGVTFEIAFARTMNRLFREHPLILLSAQDTRFKQLAVEVLCREVETAPASSYDVVAQSSILESMGYPAQTKPRAVNLFYLNQLGQRLKIEQPSPDNFLIVPDRQRYTRHQLLEICQDHPEKFSPNVILRPIVQDAVLPTFAYIGGPGEISYLAQFRKAYEHFGLSMPFVIPRGSFTLVEPKIARTMDKVLKATGRPSFSRRQVYEAVFEDVQELRKSMVSGGDSQKLDALFEQVESEVTRSLSTLEPALVKMDPTLQAALSASSGQITKIIGTIKEKTYRAGRRKHDELLQQLDKAELNLFPDGKPQERSINIFHYLNKYGPSLIGELAKVLQGYSTEAHLIVEL.

A coiled-coil region spans residues 493–518; the sequence is KEKTYRAGRRKHDELLQQLDKAELNL.

Belongs to the BshC family.

The protein is Putative cysteine ligase BshC of Chlorobaculum tepidum (strain ATCC 49652 / DSM 12025 / NBRC 103806 / TLS) (Chlorobium tepidum).